Consider the following 436-residue polypeptide: Trigger factor (436 aa).

The PPIase FKBP-type domain maps to 161–246; that stretch reads DDQLNIDFVG…VNSVSEPKLP (86 aa).

The protein belongs to the FKBP-type PPIase family. Tig subfamily.

Its subcellular location is the cytoplasm. The catalysed reaction is [protein]-peptidylproline (omega=180) = [protein]-peptidylproline (omega=0). In terms of biological role, involved in protein export. Acts as a chaperone by maintaining the newly synthesized protein in an open conformation. Functions as a peptidyl-prolyl cis-trans isomerase. The protein is Trigger factor of Pseudomonas fluorescens (strain ATCC BAA-477 / NRRL B-23932 / Pf-5).